Here is a 200-residue protein sequence, read N- to C-terminus: Molybdenum cofactor guanylyltransferase (200 aa).

Residues 10–12 (LAG), K23, N51, D69, and D99 contribute to the GTP site. Position 99 (D99) interacts with Mg(2+).

It belongs to the MobA family. Monomer. It depends on Mg(2+) as a cofactor.

The protein resides in the cytoplasm. The catalysed reaction is Mo-molybdopterin + GTP + H(+) = Mo-molybdopterin guanine dinucleotide + diphosphate. In terms of biological role, transfers a GMP moiety from GTP to Mo-molybdopterin (Mo-MPT) cofactor (Moco or molybdenum cofactor) to form Mo-molybdopterin guanine dinucleotide (Mo-MGD) cofactor. This chain is Molybdenum cofactor guanylyltransferase, found in Shewanella pealeana (strain ATCC 700345 / ANG-SQ1).